Here is a 326-residue protein sequence, read N- to C-terminus: Aldo-keto reductase family 1 member D1 (326 aa).

Residues 22-26 (GLGTY) and D52 contribute to the NADP(+) site. Y26 serves as a coordination point for substrate. Y57, W88, E119, and Y131 together coordinate substrate. Y57 serves as the catalytic Proton donor. Residues 168 to 169 (SN), Q192, and 219 to 224 (YSPLGT) contribute to the NADP(+) site. W230 is a binding site for substrate. 273 to 283 (KSTTPERIKEN) is an NADP(+) binding site.

Belongs to the aldo/keto reductase family. In terms of processing, the N-terminus is blocked.

The protein localises to the cytoplasm. It carries out the reaction 5beta-cholestan-3-one + NADP(+) = cholest-4-en-3-one + NADPH + H(+). The catalysed reaction is 4,5beta-dihydrocortisone + NADP(+) = cortisone + NADPH + H(+). The enzyme catalyses cortisol + NADPH + H(+) = 5beta-dihydrocortisol + NADP(+). It catalyses the reaction corticosterone + NADPH + H(+) = 5beta-dihydrocorticosterone + NADP(+). It carries out the reaction 7alpha,12alpha-dihydroxycholest-4-en-3-one + NADPH + H(+) = 7alpha,12alpha-dihydroxy-5beta-cholestan-3-one + NADP(+). The catalysed reaction is 7alpha-hydroxycholest-4-en-3-one + NADPH + H(+) = 7alpha-hydroxy-5beta-cholestan-3-one + NADP(+). The enzyme catalyses epitestosterone + NADPH + H(+) = 5beta-dihydroepitestosterone + NADP(+). It catalyses the reaction androst-4-ene-3,17-dione + NADPH + H(+) = 5beta-androstane-3,17-dione + NADP(+). It carries out the reaction progesterone + NADPH + H(+) = 5beta-pregnan-3,20-dione + NADP(+). The catalysed reaction is 21-hydroxyprogesterone + NADPH + H(+) = 5beta-dihydrodeoxycorticosterone + NADP(+). The enzyme catalyses aldosterone + NADPH + H(+) = 5beta-dihydroaldosterone + NADP(+). It catalyses the reaction 17beta-hydroxyandrosta-1,4-dien-3-one + NADPH + H(+) = 17beta-hydroxy-5beta-androst-1-en-3-one + NADP(+). It carries out the reaction 17beta-hydroxyestr-4-en-3-one + NADPH + H(+) = 17beta-hydroxy-5beta-estran-3-one + NADP(+). The catalysed reaction is 5beta-dihydrotestosterone + NADP(+) = testosterone + NADPH + H(+). The enzyme catalyses androst-4-ene-3,11,17-trione + NADPH + H(+) = 17beta-hydroxyandrost-4-ene-3,11-dione + NADP(+). With respect to regulation, subject to inhibition by high substrate concentrations. Inhibited by testosterone concentrations above 10 uM. Inhibited by the primary and secondary bile acids chenodeoxycholic acid and ursodeoxycholic acid. Its function is as follows. Catalyzes the stereospecific NADPH-dependent reduction of the C4-C5 double bond of bile acid intermediates and steroid hormones carrying a delta(4)-3-one structure to yield an A/B cis-ring junction. This cis-configuration is crucial for bile acid biosynthesis and plays important roles in steroid metabolism. Capable of reducing a broad range of delta-(4)-3-ketosteroids from C18 (such as, 17beta-hydroxyestr-4-en-3-one) to C27 (such as, 7alpha-hydroxycholest-4-en-3-one). In Rattus norvegicus (Rat), this protein is Aldo-keto reductase family 1 member D1 (Akr1d1).